The primary structure comprises 308 residues: D-alanine--D-alanine ligase (308 aa).

An ATP-grasp domain is found at K105–D302. An ATP-binding site is contributed by D133–D188. 3 residues coordinate Mg(2+): D256, E269, and N271.

Belongs to the D-alanine--D-alanine ligase family. Mg(2+) serves as cofactor. It depends on Mn(2+) as a cofactor.

Its subcellular location is the cytoplasm. The enzyme catalyses 2 D-alanine + ATP = D-alanyl-D-alanine + ADP + phosphate + H(+). It functions in the pathway cell wall biogenesis; peptidoglycan biosynthesis. Its function is as follows. Cell wall formation. This Anaeromyxobacter sp. (strain K) protein is D-alanine--D-alanine ligase.